The chain runs to 1032 residues: Suppression of tumorigenicity 18 protein (1032 aa).

3 disordered regions span residues 29 to 76 (RAEE…TNDH), 162 to 213 (GRDK…LTYN), and 325 to 354 (RQPK…AKCP). Residues 40–51 (NKRKSLLMKPRH) are compositionally biased toward basic residues. Residues 52 to 76 (YSPDMDCKENPDNRNEDDGLETNDH) show a composition bias toward basic and acidic residues. 6 CCHHC-type zinc fingers span residues 344 to 387 (PRPE…PLEI), 388 to 431 (LAMH…KLAM), 700 to 743 (RDLK…LKSL), 744 to 787 (MAAN…GIKM), 792 to 835 (EEKE…QKEN), and 845 to 888 (KLNK…IKKV). 24 residues coordinate Zn(2+): Cys353, Cys358, His371, Cys377, Cys397, Cys402, His415, Cys421, Cys709, Cys714, His727, Cys733, Cys753, Cys758, His771, Cys777, Cys801, Cys806, His819, Cys825, Cys854, Cys859, His872, and Cys878. Residues 905-974 (IEGDEEIRHL…KELAGLSQAL (70 aa)) are a coiled coil.

This sequence belongs to the MYT1 family. In terms of tissue distribution, detected in brain.

The protein resides in the nucleus. Repressor that binds to DNA sequences containing a bipartite element consisting of a direct repeat of the sequence 5'-AAAGTTT-3' separated by 2-9 nucleotides. Represses basal transcription activity from target promoters. This chain is Suppression of tumorigenicity 18 protein (St18), found in Rattus norvegicus (Rat).